The sequence spans 96 residues: Protein RnfH (96 aa).

The protein belongs to the UPF0125 (RnfH) family.

In Escherichia coli O17:K52:H18 (strain UMN026 / ExPEC), this protein is Protein RnfH.